The chain runs to 440 residues: Protein CapE (440 aa).

The next 12 helical transmembrane spans lie at 7 to 27 (VILI…IGYL), 31 to 51 (IGFR…VYLL), 60 to 80 (LVYL…NIFL), 102 to 122 (FSIA…ISVF), 141 to 161 (FYYT…FYII), 179 to 199 (ELPM…FAFS), 204 to 224 (THIK…LITG), 249 to 269 (WWMI…IKVF), 324 to 344 (IFSY…GYGF), 360 to 380 (YYNG…LLLW), 382 to 402 (FTNF…SVLI), and 409 to 429 (FSFV…LLFI).

The protein resides in the cell membrane. It participates in capsule biogenesis; capsule polysaccharide biosynthesis. Functionally, required for the biosynthesis of type 1 capsular polysaccharide. This is Protein CapE (capE) from Staphylococcus aureus.